The following is a 307-amino-acid chain: Ornithine carbamoyltransferase (307 aa).

Carbamoyl phosphate contacts are provided by residues 56–59 (STRT), Gln83, Arg107, and 134–137 (HPCQ). Residues Asn165, Asp223, and 227–228 (SM) each bind L-ornithine. Residues 263–264 (CL) and Arg291 contribute to the carbamoyl phosphate site.

It belongs to the aspartate/ornithine carbamoyltransferase superfamily. OTCase family.

The protein resides in the cytoplasm. It catalyses the reaction carbamoyl phosphate + L-ornithine = L-citrulline + phosphate + H(+). Its pathway is amino-acid degradation; L-arginine degradation via ADI pathway; carbamoyl phosphate from L-arginine: step 2/2. Its function is as follows. Reversibly catalyzes the transfer of the carbamoyl group from carbamoyl phosphate (CP) to the N(epsilon) atom of ornithine (ORN) to produce L-citrulline. In Cupriavidus taiwanensis (strain DSM 17343 / BCRC 17206 / CCUG 44338 / CIP 107171 / LMG 19424 / R1) (Ralstonia taiwanensis (strain LMG 19424)), this protein is Ornithine carbamoyltransferase.